Here is a 234-residue protein sequence, read N- to C-terminus: Ribose-5-phosphate isomerase A (234 aa).

Substrate is bound by residues 28-31, 83-86, and 96-99; these read TGST, DGAD, and KGGG. Catalysis depends on glutamate 105, which acts as the Proton acceptor. Lysine 123 contributes to the substrate binding site.

This sequence belongs to the ribose 5-phosphate isomerase family. As to quaternary structure, homodimer.

It carries out the reaction aldehydo-D-ribose 5-phosphate = D-ribulose 5-phosphate. Its pathway is carbohydrate degradation; pentose phosphate pathway; D-ribose 5-phosphate from D-ribulose 5-phosphate (non-oxidative stage): step 1/1. Catalyzes the reversible conversion of ribose-5-phosphate to ribulose 5-phosphate. In Bartonella quintana (strain Toulouse) (Rochalimaea quintana), this protein is Ribose-5-phosphate isomerase A.